We begin with the raw amino-acid sequence, 636 residues long: Chaperone protein HtpG (636 aa).

The a; substrate-binding stretch occupies residues 1 to 342 (MSSETLEFQA…AHDLSLNISR (342 aa)). Residues 343–558 (ELLQQDRQIQ…AHDVTPTLEK (216 aa)) form a b region. Positions 559–636 (MYRAMGHEVP…ILAERLARTL (78 aa)) are c.

The protein belongs to the heat shock protein 90 family. Homodimer.

The protein resides in the cytoplasm. In terms of biological role, molecular chaperone. Has ATPase activity. The chain is Chaperone protein HtpG from Salinispora tropica (strain ATCC BAA-916 / DSM 44818 / JCM 13857 / NBRC 105044 / CNB-440).